Here is a 135-residue protein sequence, read N- to C-terminus: MAQTQADTAARKPVGQSVSATRRVSRLRRHARLRKRIAGTQQRPRLVVHRSARHIHVQLVNDANGTTVAAASSIETDVRGLDGDKKARSVRVGQLIAERAKAAGIDTVVFDRGGYTYGGRIAALADAARENGLKF.

Positions 1–23 (MAQTQADTAARKPVGQSVSATRR) are disordered.

It belongs to the universal ribosomal protein uL18 family. Part of the 50S ribosomal subunit; part of the 5S rRNA/L5/L18/L25 subcomplex. Contacts the 5S and 23S rRNAs.

Functionally, this is one of the proteins that bind and probably mediate the attachment of the 5S RNA into the large ribosomal subunit, where it forms part of the central protuberance. This Mycobacterium marinum (strain ATCC BAA-535 / M) protein is Large ribosomal subunit protein uL18.